The following is a 219-amino-acid chain: Small ribosomal subunit protein uS5 (219 aa).

The span at 1-21 (MTDQNQKANQGNGLQTTNLQA) shows a compositional bias: polar residues. The segment at 1–61 (MTDQNQKANQ…NQNRRFQKPA (61 aa)) is disordered. Basic and acidic residues predominate over residues 35-47 (GIKKAVSKKEGGG). The S5 DRBM domain occupies 66 to 129 (FEERIVKLKR…KAAHNSLHTI (64 aa)).

It belongs to the universal ribosomal protein uS5 family. As to quaternary structure, part of the 30S ribosomal subunit. Contacts proteins S4 and S8.

Its function is as follows. With S4 and S12 plays an important role in translational accuracy. Located at the back of the 30S subunit body where it stabilizes the conformation of the head with respect to the body. This chain is Small ribosomal subunit protein uS5, found in Mycoplasma pneumoniae (strain ATCC 29342 / M129 / Subtype 1) (Mycoplasmoides pneumoniae).